The chain runs to 224 residues: Peptidyl-prolyl cis-trans isomerase FKBP3 (224 aa).

N-acetylalanine is present on alanine 2. A Phosphoserine modification is found at serine 36. Positions 89 to 102 are enriched in basic and acidic residues; the sequence is KLNEDKPKETKSEE. The tract at residues 89–111 is disordered; it reads KLNEDKPKETKSEETLDEGPPKY. Lysine 99 is modified (N6-acetyllysine). The PPIase FKBP-type domain occupies 128 to 224; that stretch reads GDVVHCWYTG…TFEVELVDID (97 aa). At serine 152 the chain carries Phosphoserine. Lysine 170 carries the post-translational modification N6-acetyllysine.

It belongs to the FKBP-type PPIase family.

It is found in the nucleus. The catalysed reaction is [protein]-peptidylproline (omega=180) = [protein]-peptidylproline (omega=0). With respect to regulation, inhibited preferentially by rapamycin over FK506. FK506- and rapamycin-binding proteins (FKBPs) constitute a family of receptors for the two immunosuppressants which inhibit T-cell proliferation by arresting two distinct cytoplasmic signal transmission pathways. PPIases accelerate the folding of proteins. In Homo sapiens (Human), this protein is Peptidyl-prolyl cis-trans isomerase FKBP3 (FKBP3).